Consider the following 460-residue polypeptide: Argininosuccinate lyase (460 aa).

The protein belongs to the lyase 1 family. Argininosuccinate lyase subfamily.

Its subcellular location is the cytoplasm. It catalyses the reaction 2-(N(omega)-L-arginino)succinate = fumarate + L-arginine. It functions in the pathway amino-acid biosynthesis; L-arginine biosynthesis; L-arginine from L-ornithine and carbamoyl phosphate: step 3/3. In Mannheimia succiniciproducens (strain KCTC 0769BP / MBEL55E), this protein is Argininosuccinate lyase.